The chain runs to 147 residues: uncharacterized protein (147 aa).

The HTH marR-type domain maps to 11-147; sequence NTSPGFLLWQ…SGLQELLKHE (137 aa). The H-T-H motif DNA-binding region spans 61-84; the sequence is QKKLASFSQTNIMMVSEVVRTLEK.

This is an uncharacterized protein from Bacillus subtilis (strain 168).